The chain runs to 380 residues: Kappa-type opioid receptor (380 aa).

The Extracellular portion of the chain corresponds to 1–57; the sequence is MEPPVQIFRGEPGPTCSPSTCLPPNGSGWFPGWAEPDGNGSAGSEDVLLEPAHISPV. 2 N-linked (GlcNAc...) asparagine glycosylation sites follow: Asn25 and Asn39. Residues 58–85 traverse the membrane as a helical segment; sequence ILVIITAVYSVVFVVGLVGNSLVMFVII. Over 86-95 the chain is Cytoplasmic; it reads RYTKMKTATN. Residues 96–119 traverse the membrane as a helical segment; that stretch reads IYIFNLALADALVTTTMPFQSTVY. Residues 120-132 are Extracellular-facing; that stretch reads LMNSWPFGDVLCK. Cysteines 131 and 210 form a disulfide. A helical membrane pass occupies residues 133–154; the sequence is VVISIDYYNMFTSIFTLTMMSV. Residues 155-173 lie on the Cytoplasmic side of the membrane; sequence DRYIAVCHPVKALDFRTPL. Residues 174–196 traverse the membrane as a helical segment; it reads KAKIINICIWILSSSVGISAIVL. At 197–222 the chain is on the extracellular side; the sequence is GGTKVREDMEVIECSLQFPDDDYSWW. A helical membrane pass occupies residues 223-247; that stretch reads DLFMKVCVFVFAFVIPVLIIIVCYT. The Cytoplasmic segment spans residues 248–274; sequence LMILRLKSVRLLSGSREKDRNLRRITR. Residues 275–296 form a helical membrane-spanning segment; that stretch reads LVLVVVAVFVVCWTPIHIFILV. Residues 297–311 are Extracellular-facing; it reads EALGSTAHSTAALSS. Residues 312-333 traverse the membrane as a helical segment; the sequence is YYFCIALGYTNSSLNPILYAFL. Residues 334-380 lie on the Cytoplasmic side of the membrane; the sequence is DENFKRCFRDFCFPIKMRMERQSTSRVRNTVQDPAYVREVDGVNKPV. Cys345 is lipidated: S-palmitoyl cysteine.

The protein belongs to the G-protein coupled receptor 1 family. In terms of assembly, interacts with NHERF1. Interacts with GABARAPL1.

Its subcellular location is the cell membrane. Its function is as follows. G-protein coupled opioid receptor that functions as a receptor for endogenous alpha-neoendorphins and dynorphins, but has low affinity for beta-endorphins. Also functions as a receptor for various synthetic opioids and for the psychoactive diterpene salvinorin A. Ligand binding causes a conformation change that triggers signaling via guanine nucleotide-binding proteins (G proteins) and modulates the activity of down-stream effectors, such as adenylate cyclase. Signaling leads to the inhibition of adenylate cyclase activity. Inhibits neurotransmitter release by reducing calcium ion currents and increasing potassium ion conductance. Plays a role in the perception of pain. Plays a role in mediating reduced physical activity upon treatment with synthetic opioids. Plays a role in the regulation of salivation in response to synthetic opioids. May play a role in arousal and regulation of autonomic and neuroendocrine functions. The chain is Kappa-type opioid receptor (OPRK1) from Bos taurus (Bovine).